The primary structure comprises 414 residues: Gamma-glutamyl phosphate reductase (414 aa).

Belongs to the gamma-glutamyl phosphate reductase family.

It is found in the cytoplasm. It carries out the reaction L-glutamate 5-semialdehyde + phosphate + NADP(+) = L-glutamyl 5-phosphate + NADPH + H(+). It functions in the pathway amino-acid biosynthesis; L-proline biosynthesis; L-glutamate 5-semialdehyde from L-glutamate: step 2/2. Its function is as follows. Catalyzes the NADPH-dependent reduction of L-glutamate 5-phosphate into L-glutamate 5-semialdehyde and phosphate. The product spontaneously undergoes cyclization to form 1-pyrroline-5-carboxylate. The sequence is that of Gamma-glutamyl phosphate reductase from Xanthomonas campestris pv. campestris (strain 8004).